A 232-amino-acid polypeptide reads, in one-letter code: Orotidine 5'-phosphate decarboxylase (232 aa).

Substrate is bound by residues Asp13, Lys35, 62-71, Thr122, Arg182, Gln191, Gly211, and Arg212; that span reads DLKFHDIPNT. The active-site Proton donor is the Lys64.

This sequence belongs to the OMP decarboxylase family. Type 1 subfamily. Homodimer.

The catalysed reaction is orotidine 5'-phosphate + H(+) = UMP + CO2. Its pathway is pyrimidine metabolism; UMP biosynthesis via de novo pathway; UMP from orotate: step 2/2. Functionally, catalyzes the decarboxylation of orotidine 5'-monophosphate (OMP) to uridine 5'-monophosphate (UMP). The chain is Orotidine 5'-phosphate decarboxylase from Pseudomonas paraeruginosa (strain DSM 24068 / PA7) (Pseudomonas aeruginosa (strain PA7)).